A 299-amino-acid polypeptide reads, in one-letter code: Bifunctional protein FolD (299 aa).

Residues 168–170 (GRS), Ser193, and Ile234 contribute to the NADP(+) site.

The protein belongs to the tetrahydrofolate dehydrogenase/cyclohydrolase family. As to quaternary structure, homodimer.

The enzyme catalyses (6R)-5,10-methylene-5,6,7,8-tetrahydrofolate + NADP(+) = (6R)-5,10-methenyltetrahydrofolate + NADPH. It carries out the reaction (6R)-5,10-methenyltetrahydrofolate + H2O = (6R)-10-formyltetrahydrofolate + H(+). Its pathway is one-carbon metabolism; tetrahydrofolate interconversion. Catalyzes the oxidation of 5,10-methylenetetrahydrofolate to 5,10-methenyltetrahydrofolate and then the hydrolysis of 5,10-methenyltetrahydrofolate to 10-formyltetrahydrofolate. In Brucella anthropi (strain ATCC 49188 / DSM 6882 / CCUG 24695 / JCM 21032 / LMG 3331 / NBRC 15819 / NCTC 12168 / Alc 37) (Ochrobactrum anthropi), this protein is Bifunctional protein FolD.